Consider the following 124-residue polypeptide: Large ribosomal subunit protein bL17 (124 aa).

Belongs to the bacterial ribosomal protein bL17 family. As to quaternary structure, part of the 50S ribosomal subunit. Contacts protein L32.

The polypeptide is Large ribosomal subunit protein bL17 (Borrelia turicatae (strain 91E135)).